Reading from the N-terminus, the 196-residue chain is Dephospho-CoA kinase (196 aa).

The DPCK domain maps to 5–196; it reads IIGLTGGIAT…QVDIALNFEL (192 aa). 13-18 serves as a coordination point for ATP; sequence ATGKTT.

This sequence belongs to the CoaE family.

It is found in the cytoplasm. It catalyses the reaction 3'-dephospho-CoA + ATP = ADP + CoA + H(+). The protein operates within cofactor biosynthesis; coenzyme A biosynthesis; CoA from (R)-pantothenate: step 5/5. Functionally, catalyzes the phosphorylation of the 3'-hydroxyl group of dephosphocoenzyme A to form coenzyme A. This is Dephospho-CoA kinase from Trichormus variabilis (strain ATCC 29413 / PCC 7937) (Anabaena variabilis).